We begin with the raw amino-acid sequence, 36 residues long: GLIDVRCYDSRQCWIACKKVTGSTQGKCQNKQCRCY.

Intrachain disulfides connect Cys7–Cys28, Cys13–Cys33, and Cys17–Cys35. An interaction with Ca(2+)-activated K(+) channels region spans residues 26–33 (GKCQNKQC).

The protein belongs to the short scorpion toxin superfamily. Potassium channel inhibitor family. Alpha-KTx 16 subfamily. Expressed by the venom gland.

The protein resides in the secreted. In terms of biological role, augments responses to direct muscle stimulation probably by blocking calcium-activated potassium channels. This is Potassium channel toxin alpha-KTx 16.5 from Leiurus hebraeus (Hebrew deathstalker scorpion).